The chain runs to 528 residues: GMP synthase [glutamine-hydrolyzing] (528 aa).

The region spanning 13 to 204 (SILILDFGSQ…VYGISSCVAD (192 aa)) is the Glutamine amidotransferase type-1 domain. The active-site Nucleophile is cysteine 90. Residues histidine 178 and glutamate 180 contribute to the active site. One can recognise a GMPS ATP-PPase domain in the interval 205 to 403 (WTTETYIEET…LGLPDEIIKR (199 aa)). An ATP-binding site is contributed by 232 to 238 (SGGVDSS).

In terms of assembly, homodimer.

The enzyme catalyses XMP + L-glutamine + ATP + H2O = GMP + L-glutamate + AMP + diphosphate + 2 H(+). It functions in the pathway purine metabolism; GMP biosynthesis; GMP from XMP (L-Gln route): step 1/1. In terms of biological role, catalyzes the synthesis of GMP from XMP. The sequence is that of GMP synthase [glutamine-hydrolyzing] from Prochlorococcus marinus (strain MIT 9312).